Here is a 53-residue protein sequence, read N- to C-terminus: Serine rich endogenous peptide 3 (53 aa).

An N-terminal signal peptide occupies residues 1-26 (MTKKGPLNLRLLLLLLVVLLPSCSNC). The short motif at 37 to 53 (SSEWRRKMITVWSKSSY) is the SCOOP motif element. Positions 49 to 51 (SKS) match the SxS motif essential for MIK2 binding motif.

This sequence belongs to the serine rich endogenous peptide (SCOOP) phytocytokine family. In terms of assembly, interacts with MIK2 (via extracellular leucine-rich repeat domain); this interaction triggers the formation of complex between MIK2 and the BAK1/SERK3 and SERK4 coreceptors, and subsequent BAK1 activation by phosphorylation.

Its subcellular location is the cell membrane. The protein localises to the secreted. It is found in the extracellular space. It localises to the apoplast. In terms of biological role, brassicaceae-specific phytocytokine (plant endogenous peptide released into the apoplast) perceived by MIK2 in a BAK1/SERK3 and SERK4 coreceptors-dependent manner, that modulates various physiological and antimicrobial processes including growth prevention and reactive oxygen species (ROS) response regulation. This Arabidopsis thaliana (Mouse-ear cress) protein is Serine rich endogenous peptide 3.